Reading from the N-terminus, the 871-residue chain is Translation initiation factor IF-2 (871 aa).

2 disordered regions span residues 60–101 and 184–203; these read KKNI…QEVK and ESLK…KKES. The span at 61 to 72 shows a compositional bias: basic residues; the sequence is KNIKTPTAKKPK. Residues 73–101 are compositionally biased toward basic and acidic residues; the sequence is KENIKEQEKLNESEKKEPKKEEKLKQEVK. One can recognise a tr-type G domain in the interval 370–537; the sequence is TRAPVITIMG…IVLLQADILE (168 aa). The interval 379–386 is G1; sequence GHVDHGKT. 379-386 is a GTP binding site; sequence GHVDHGKT. The interval 404–408 is G2; that stretch reads GITQH. A G3 region spans residues 425–428; that stretch reads DTPG. Residues 425-429 and 479-482 contribute to the GTP site; these read DTPGH and NKMD. The segment at 479 to 482 is G4; that stretch reads NKMD. The interval 515–517 is G5; that stretch reads SAK.

It belongs to the TRAFAC class translation factor GTPase superfamily. Classic translation factor GTPase family. IF-2 subfamily.

It is found in the cytoplasm. Its function is as follows. One of the essential components for the initiation of protein synthesis. Protects formylmethionyl-tRNA from spontaneous hydrolysis and promotes its binding to the 30S ribosomal subunits. Also involved in the hydrolysis of GTP during the formation of the 70S ribosomal complex. The chain is Translation initiation factor IF-2 from Campylobacter jejuni subsp. jejuni serotype O:23/36 (strain 81-176).